A 1004-amino-acid chain; its full sequence is MAEHESLEFGKADFVLLDNVSLEEFMANLKLRFEKGRIYSYIGEVVVSVNPYRAMNIYGRDVIEQYKGRELYERPPHLFAIADAAYKAMKRRNKDTCIVISGESGAGKTEASKYIMQYIAAITNPSQRAEVERVKNMLLKSNCVLEAFGNAKTNRNDNSSRFGKYMDINFDFKGDPIGGHINNYLLEKSRVIFQQEGERSFHSFYQLVKGAPDAQLRSLHIQRDPTAYNYIKVGGQLKSSINDSAEFKAVADAMKVIGFTTEEIQTVYKILATILHLGNLKFGTDGDVTLIENSKLVSVLGDLLSTKEENVEKAMLYRTVATGRDVIDKQHTHQEASYGRDALAKAIYERLFCWIVGRINDIIEVKNYDARVHGKNTVIGVLDIYGFEIFQNNSFEQFCINYCNEKLQQLFIQLVLKQEQEEYQREGIPWKHIDYFNNQIIVDLVEQQHKGIFAVLDEACMNVGKVTDEMFLQALNGKLAKHAHYTSRKLSPTDKNLEFERDFRIRHYAGDVTYSVVGFIDKNKDTLFQDFKRLLYNSSNPVLKAMWPEGKLSITEVTKRPLTAATLFKNSMISLVEKLASKEPYYVRCIKPNDVKSPLLFEHERCKHQVEYLGLLENVRVRRAGFANRQTYPRFLQRYKMISEFTWPNHDLSSDKEAVKRLLQGCGFEHDVAYGKTKVFIRTPRTIFSLEEQRAEMVKRIVLFLQKVWRGTLARMRYRRMRAALIIIRAYRRYKVKSYIREVIRRFKNVRDMKDHGKHVKWPTPPKVLRKFEEALRSIYNRWWAWTLIKPLSPEKTVQIRAKVATLECLKGQRADLGLQRAWEGNYLKKDSPGTASSFTLVSSDLQRKDKFMRVLFSSNVRKINRFNKAEDRALLITDRHLYKMDPLKQYKPMKSIPLYNVTGVSISPGKDQLVVFHTKDNRDLIVCLQGMVPAGDSRIGELVGTLLSHFKSEKRKLQVNTVSPIHCSMNGRKCTVVVETKISQSQPDFTKSRSGYILSVPGN.

Residues 9-695 (FGKADFVLLD…TIFSLEEQRA (687 aa)) form the Myosin motor domain. 102 to 109 (GESGAGKT) contacts ATP. The tract at residues 572 to 594 (MISLVEKLASKEPYYVRCIKPND) is actin-binding. IQ domains are found at residues 699–719 (KRIV…MRYR) and 721–741 (MRAA…SYIR). The 192-residue stretch at 812–1003 (GQRADLGLQR…RSGYILSVPG (192 aa)) folds into the TH1 domain.

Belongs to the TRAFAC class myosin-kinesin ATPase superfamily. Myosin family. As to quaternary structure, interacts (via the two IQ motifs) with calmodulin. Interacts with F-actin.

The protein localises to the cytoplasm. The protein resides in the perikaryon. It localises to the cell projection. Its subcellular location is the dendrite. It is found in the early endosome. The protein localises to the cell cortex. Its function is as follows. Unconventional myosin that functions as actin-based motor protein with ATPase activity. Plays a role in the formation of Kupffer's vesicle, an organ that functions as a left-right organizer during embryogenesis. Plays a role in vesicular trafficking events that are required for normal lumen expansion of Kupffer's vesicle. Required for normal orientation of cilia in Kupffer's vesicle, and thus for normal, unidirectional circular flow and normal angular flow velocity, which then mediates asymmetric gene expression and left-right asymmetric development. Plays a role in endosomal protein trafficking, and especially in the transfer of cargo proteins from early to recycling endosomes. Required for normal planar cell polarity in ciliated cells, for normal rotational polarity of cilia, and for coordinated, unidirectional ciliary movement. This chain is Unconventional myosin-Id (myo1d), found in Danio rerio (Zebrafish).